Consider the following 270-residue polypeptide: SAGA-associated factor 29 homolog A (270 aa).

At Ser2 the chain carries N-acetylserine. Positions 85-113 (LPSGPTGQQRRKLEGNEQKRKRMKVDTDV) are disordered. Positions 95 to 113 (RKLEGNEQKRKRMKVDTDV) are enriched in basic and acidic residues. The SGF29 C-terminal domain occupies 125–270 (EAYASLKGEQ…VVALPEGHRQ (146 aa)). 2 histone H3K4me3 N-terminus binding regions span residues 168 to 170 (DEE) and 217 to 220 (GTTA). Residues 242-245 (FDDD) form a histone H3K4me3 binding region.

The protein belongs to the SGF29 family. In terms of tissue distribution, expressed in roots, rosette leaves, cauline leaves, stems and flowers.

It localises to the nucleus. Chromatin reader component of the transcription regulatory histone acetylation (HAT) complex SAGA. Involved in salt stress tolerance. Enhances the effect of ADA2B in the positive regulation of salt-induced gene expression. In Arabidopsis thaliana (Mouse-ear cress), this protein is SAGA-associated factor 29 homolog A.